Consider the following 189-residue polypeptide: Photosystem I assembly protein Ycf4 (189 aa).

A run of 2 helical transmembrane segments spans residues 31–51 (TVIL…YFGF) and 70–90 (VMSF…LTII).

This sequence belongs to the Ycf4 family.

Its subcellular location is the plastid. The protein localises to the chloroplast thylakoid membrane. In terms of biological role, seems to be required for the assembly of the photosystem I complex. The protein is Photosystem I assembly protein Ycf4 of Chlorokybus atmophyticus (Soil alga).